The following is a 93-amino-acid chain: NADH-ubiquinone oxidoreductase chain 4L (93 aa).

3 helical membrane passes run 3-23 (LTIL…GPLG), 27-47 (IIKL…LIIL), and 55-75 (ILGL…SAIG).

This sequence belongs to the complex I subunit 4L family.

The protein localises to the mitochondrion membrane. It catalyses the reaction a ubiquinone + NADH + 5 H(+)(in) = a ubiquinol + NAD(+) + 4 H(+)(out). Core subunit of the mitochondrial membrane respiratory chain NADH dehydrogenase (Complex I) that is believed to belong to the minimal assembly required for catalysis. Complex I functions in the transfer of electrons from NADH to the respiratory chain. The immediate electron acceptor for the enzyme is believed to be ubiquinone. This chain is NADH-ubiquinone oxidoreductase chain 4L (ND4L), found in Wickerhamomyces canadensis (Yeast).